The sequence spans 146 residues: Snaclec agkisacutacin subunit B (146 aa).

Residues 1-23 form the signal peptide; sequence MGRFIFVSFGLLVVFLSLSGTAA. A C-type lectin domain is found at 24-146; that stretch reads DCPSDWSSYE…TCSFVCKFQA (123 aa). Intrachain disulfides connect Cys-25–Cys-36, Cys-53–Cys-142, and Cys-119–Cys-134. Residues Ser-64 and Glu-70 each coordinate Ca(2+).

This sequence belongs to the snaclec family. As to quaternary structure, heterodimer of subunits A and B; disulfide-linked. In terms of tissue distribution, expressed by the venom gland.

Its subcellular location is the secreted. Anticoagulant protein which binds to the gamma-carboxyglutamic acid-domain regions of factor IX (F9) and factor X (F10) in the presence of calcium with a 1 to 1 stoichiometry. Also inhibits platelet aggregation by binding to platelet glycoprotein Ibalpha (GP1BA) and functioning as a blocker of von Willebrand factor (VWF). Is devoid of hemorrhagic and lethal activities. Possesses antithrombotic and thrombolytic activities. Also hydrolyzes the Aalpha-chain of fibrinogen (FGA). Does not affect the Bbeta-chain (FGB) and the gamma chain (FGG). This chain is Snaclec agkisacutacin subunit B, found in Deinagkistrodon acutus (Hundred-pace snake).